Here is a 953-residue protein sequence, read N- to C-terminus: E3 ubiquitin-protein ligase ZNF598 (953 aa).

Over residues 25–39 (KPSKSTRIKPTKPHH) the composition is skewed to basic residues. Residues 25–47 (KPSKSTRIKPTKPHHTPSNSMES) are disordered. Residues 57–97 (CVLCCQDIDLFAVGKCDHPVCYRCSTKMRVLCEQKYCAVCR) form an RING-type zinc finger. The C2H2-type zinc-finger motif lies at 215–238 (PLCKFCDDRYLDNDELLKHLRRDH). 2 disordered regions span residues 299 to 779 (SKNR…EDSS) and 884 to 911 (EKQQQGSKPKKSKKKAWQTGTSSSSSLD). The span at 371 to 380 (AAAMRASMAS) shows a compositional bias: low complexity. The segment covering 381–409 (HQEERSHAQERSMLKPRREEKLEPDETRN) has biased composition (basic and acidic residues). 2 stretches are compositionally biased toward polar residues: residues 410-431 (NRSTARPTNDTQARSMKSNGSL) and 467-483 (LSGSVVSSPMTPAYTNQ). Position 489 is a phosphoserine (serine 489). Composition is skewed to low complexity over residues 508-518 (QSSAASAWSQA) and 536-553 (MTPMSSSSILSSTDPLPS). 2 stretches are compositionally biased toward polar residues: residues 555–564 (SVPQPLTASS) and 641–650 (LGSPSHTPET). The span at 655–666 (AHKENVPEKKPP) shows a compositional bias: basic and acidic residues. Positions 695-711 (SCTSFPENITSSKQPVT) are enriched in polar residues. Pro residues predominate over residues 747–765 (LPPPPPPGLGPAVSKPPPG). Residues 770–779 (PLNSNVEDSS) are compositionally biased toward polar residues.

This sequence belongs to the ZNF598/HEL2 family.

It is found in the cytoplasm. Its subcellular location is the cytosol. It catalyses the reaction S-ubiquitinyl-[E2 ubiquitin-conjugating enzyme]-L-cysteine + [acceptor protein]-L-lysine = [E2 ubiquitin-conjugating enzyme]-L-cysteine + N(6)-ubiquitinyl-[acceptor protein]-L-lysine.. It functions in the pathway protein modification; protein ubiquitination. E3 ubiquitin-protein ligase that plays a key role in the ribosome quality control (RQC), a pathway that takes place when a ribosome has stalled during translation, leading to degradation of nascent peptide chains. ZNF598 is activated when ribosomes are stalled within an mRNA following translation of prematurely polyadenylated mRNAs. Acts as a ribosome collision sensor: specifically recognizes and binds collided di-ribosome, which arises when a trailing ribosome encounters a slower leading ribosome, leading to terminally arrest translation. Following binding to colliding ribosomes, mediates monoubiquitination of 40S ribosomal proteins RPS10/eS10 and RPS3/uS3, and 'Lys-63'-linked polyubiquitination of RPS20/uS10. Polyubiquitination of RPS20/uS10 promotes recruitment of the RQT (ribosome quality control trigger) complex, which drives the disassembly of stalled ribosomes, followed by degradation of nascent peptides. The polypeptide is E3 ubiquitin-protein ligase ZNF598 (Danio rerio (Zebrafish)).